The chain runs to 124 residues: Large ribosomal subunit protein bL12 (124 aa).

This sequence belongs to the bacterial ribosomal protein bL12 family. Homodimer. Part of the ribosomal stalk of the 50S ribosomal subunit. Forms a multimeric L10(L12)X complex, where L10 forms an elongated spine to which 2 to 4 L12 dimers bind in a sequential fashion. Binds GTP-bound translation factors.

In terms of biological role, forms part of the ribosomal stalk which helps the ribosome interact with GTP-bound translation factors. Is thus essential for accurate translation. The protein is Large ribosomal subunit protein bL12 of Xanthobacter autotrophicus (strain ATCC BAA-1158 / Py2).